The primary structure comprises 193 residues: Xanthine phosphoribosyltransferase (193 aa).

The xanthine site is built by Leu-20 and Thr-27. 5-phospho-alpha-D-ribose 1-diphosphate is bound at residue 128 to 132; sequence ANGQA. Residue Lys-156 coordinates xanthine.

Belongs to the purine/pyrimidine phosphoribosyltransferase family. Xpt subfamily. Homodimer.

The protein resides in the cytoplasm. The enzyme catalyses XMP + diphosphate = xanthine + 5-phospho-alpha-D-ribose 1-diphosphate. It functions in the pathway purine metabolism; XMP biosynthesis via salvage pathway; XMP from xanthine: step 1/1. Converts the preformed base xanthine, a product of nucleic acid breakdown, to xanthosine 5'-monophosphate (XMP), so it can be reused for RNA or DNA synthesis. This chain is Xanthine phosphoribosyltransferase, found in Streptococcus pneumoniae serotype 4 (strain ATCC BAA-334 / TIGR4).